Reading from the N-terminus, the 544-residue chain is Probable protein kinase UbiB (544 aa).

Positions 123–501 (DFDIKPLASA…KRQQAKGQFL (379 aa)) constitute a Protein kinase domain. Residues 129 to 137 (LASASIAQV) and lysine 152 each bind ATP. Catalysis depends on aspartate 287, which acts as the Proton acceptor. Residues 515-537 (LLTSNITVLASISAATGAAFWLF) traverse the membrane as a helical segment.

It belongs to the ABC1 family. UbiB subfamily.

It localises to the cell inner membrane. Its pathway is cofactor biosynthesis; ubiquinone biosynthesis [regulation]. Is probably a protein kinase regulator of UbiI activity which is involved in aerobic coenzyme Q (ubiquinone) biosynthesis. The protein is Probable protein kinase UbiB of Aliivibrio fischeri (strain ATCC 700601 / ES114) (Vibrio fischeri).